The following is a 192-amino-acid chain: Protein GrpE (192 aa).

Basic and acidic residues predominate over residues 1 to 20; that stretch reads MEERNEQVVEEVKEEVKEAQ. Positions 1 to 39 are disordered; sequence MEERNEQVVEEVKEEVKEAQVEEAVTSEDSEESVEEKSE. Acidic residues predominate over residues 25–34; that stretch reads VTSEDSEESV.

This sequence belongs to the GrpE family. In terms of assembly, homodimer.

The protein resides in the cytoplasm. In terms of biological role, participates actively in the response to hyperosmotic and heat shock by preventing the aggregation of stress-denatured proteins, in association with DnaK and GrpE. It is the nucleotide exchange factor for DnaK and may function as a thermosensor. Unfolded proteins bind initially to DnaJ; upon interaction with the DnaJ-bound protein, DnaK hydrolyzes its bound ATP, resulting in the formation of a stable complex. GrpE releases ADP from DnaK; ATP binding to DnaK triggers the release of the substrate protein, thus completing the reaction cycle. Several rounds of ATP-dependent interactions between DnaJ, DnaK and GrpE are required for fully efficient folding. In Bacillus cereus (strain ATCC 10987 / NRS 248), this protein is Protein GrpE.